Consider the following 491-residue polypeptide: UDP-N-acetylmuramate--L-alanine ligase (491 aa).

126 to 132 (GTHGKTT) is an ATP binding site.

It belongs to the MurCDEF family.

The protein localises to the cytoplasm. The enzyme catalyses UDP-N-acetyl-alpha-D-muramate + L-alanine + ATP = UDP-N-acetyl-alpha-D-muramoyl-L-alanine + ADP + phosphate + H(+). It functions in the pathway cell wall biogenesis; peptidoglycan biosynthesis. Its function is as follows. Cell wall formation. This Klebsiella pneumoniae subsp. pneumoniae (strain ATCC 700721 / MGH 78578) protein is UDP-N-acetylmuramate--L-alanine ligase.